We begin with the raw amino-acid sequence, 173 residues long: Crossover junction endodeoxyribonuclease RuvC (173 aa).

Residues aspartate 8, glutamate 68, and aspartate 140 contribute to the active site. Residues aspartate 8, glutamate 68, and aspartate 140 each coordinate Mg(2+).

The protein belongs to the RuvC family. As to quaternary structure, homodimer which binds Holliday junction (HJ) DNA. The HJ becomes 2-fold symmetrical on binding to RuvC with unstacked arms; it has a different conformation from HJ DNA in complex with RuvA. In the full resolvosome a probable DNA-RuvA(4)-RuvB(12)-RuvC(2) complex forms which resolves the HJ. Requires Mg(2+) as cofactor.

It localises to the cytoplasm. It catalyses the reaction Endonucleolytic cleavage at a junction such as a reciprocal single-stranded crossover between two homologous DNA duplexes (Holliday junction).. Functionally, the RuvA-RuvB-RuvC complex processes Holliday junction (HJ) DNA during genetic recombination and DNA repair. Endonuclease that resolves HJ intermediates. Cleaves cruciform DNA by making single-stranded nicks across the HJ at symmetrical positions within the homologous arms, yielding a 5'-phosphate and a 3'-hydroxyl group; requires a central core of homology in the junction. The consensus cleavage sequence is 5'-(A/T)TT(C/G)-3'. Cleavage occurs on the 3'-side of the TT dinucleotide at the point of strand exchange. HJ branch migration catalyzed by RuvA-RuvB allows RuvC to scan DNA until it finds its consensus sequence, where it cleaves and resolves the cruciform DNA. The protein is Crossover junction endodeoxyribonuclease RuvC of Saccharophagus degradans (strain 2-40 / ATCC 43961 / DSM 17024).